The following is a 341-amino-acid chain: Paired box protein Pax-9 (341 aa).

A DNA-binding region (paired) is located at residues 4–130 (AFGEVNQLGG…SSISRILRNK (127 aa)). Residues 7–63 (EVNQLGGVFVNGRPLPNAIRLRIVELAQLGIRPCDISRQLRVSHGCVSKILARYNET) are PAI subdomain. Residues 82–130 (TVVKHIRTYKQRDPGIFAWEIRDRLLADGVCDKYNVPSVSSISRILRNK) are RED subdomain. Positions 168–189 (AAAAKVPTPPGVPAIPGSVAMP) are interaction with KDM5B.

In terms of assembly, interacts with KDM5B.

The protein localises to the nucleus. Transcription factor required for normal development of thymus, parathyroid glands, ultimobranchial bodies, teeth, skeletal elements of skull and larynx as well as distal limbs. The polypeptide is Paired box protein Pax-9 (PAX9) (Propithecus coquereli (Coquerel's sifaka)).